The primary structure comprises 208 residues: Large ribosomal subunit protein uL3 (208 aa).

A disordered region spans residues 116 to 148 (GFQGVIKRHGQSRGPMAHGSRYHRRPGSMGPVA).

It belongs to the universal ribosomal protein uL3 family. In terms of assembly, part of the 50S ribosomal subunit. Forms a cluster with proteins L14 and L19.

Functionally, one of the primary rRNA binding proteins, it binds directly near the 3'-end of the 23S rRNA, where it nucleates assembly of the 50S subunit. In Streptococcus pyogenes serotype M6 (strain ATCC BAA-946 / MGAS10394), this protein is Large ribosomal subunit protein uL3.